Consider the following 440-residue polypeptide: Thymidine phosphorylase (440 aa).

This sequence belongs to the thymidine/pyrimidine-nucleoside phosphorylase family. As to quaternary structure, homodimer.

It catalyses the reaction thymidine + phosphate = 2-deoxy-alpha-D-ribose 1-phosphate + thymine. It functions in the pathway pyrimidine metabolism; dTMP biosynthesis via salvage pathway; dTMP from thymine: step 1/2. Its function is as follows. The enzymes which catalyze the reversible phosphorolysis of pyrimidine nucleosides are involved in the degradation of these compounds and in their utilization as carbon and energy sources, or in the rescue of pyrimidine bases for nucleotide synthesis. This is Thymidine phosphorylase from Salmonella arizonae (strain ATCC BAA-731 / CDC346-86 / RSK2980).